A 354-amino-acid polypeptide reads, in one-letter code: uncharacterized protein (354 aa).

Disordered stretches follow at residues 1–74 and 87–115; these read MGTK…ENCR and SESGVCTEPEERGQGGKKSQFLPINQRAS. The residue at position 19 (Lys-19) is an N6-acetyllysine. Residues 32–41 show a composition bias toward low complexity; the sequence is EGPSSNSSFH. Acidic residues predominate over residues 45–54; it reads EEGTDLEGDM. A phosphoserine mark is found at Ser-115 and Ser-174. Over residues 182-199 the composition is skewed to polar residues; it reads QGSSQDLPMQANLSQSNE. 2 disordered regions span residues 182–208 and 235–298; these read QGSSQDLPMQANLSQSNEGPLLAGRDR and QVAD…DELS. Tyr-291 carries the post-translational modification Phosphotyrosine. Ser-292 is modified (phosphoserine).

This is an uncharacterized protein from Mus musculus (Mouse).